A 91-amino-acid polypeptide reads, in one-letter code: Cell division topological specificity factor (91 aa).

This sequence belongs to the MinE family.

Its function is as follows. Prevents the cell division inhibition by proteins MinC and MinD at internal division sites while permitting inhibition at polar sites. This ensures cell division at the proper site by restricting the formation of a division septum at the midpoint of the long axis of the cell. The polypeptide is Cell division topological specificity factor (Bradyrhizobium diazoefficiens (strain JCM 10833 / BCRC 13528 / IAM 13628 / NBRC 14792 / USDA 110)).